We begin with the raw amino-acid sequence, 240 residues long: Triosephosphate isomerase (240 aa).

Substrate is bound at residue 8-10; the sequence is NWK. H93 serves as the catalytic Electrophile. E160 (proton acceptor) is an active-site residue. Residue G166 participates in substrate binding.

It belongs to the triosephosphate isomerase family. Homodimer.

The protein localises to the cytoplasm. The catalysed reaction is D-glyceraldehyde 3-phosphate = dihydroxyacetone phosphate. It participates in carbohydrate biosynthesis; gluconeogenesis. It functions in the pathway carbohydrate degradation; glycolysis; D-glyceraldehyde 3-phosphate from glycerone phosphate: step 1/1. In terms of biological role, involved in the gluconeogenesis. Catalyzes stereospecifically the conversion of dihydroxyacetone phosphate (DHAP) to D-glyceraldehyde-3-phosphate (G3P). In Ehrlichia chaffeensis (strain ATCC CRL-10679 / Arkansas), this protein is Triosephosphate isomerase.